The sequence spans 491 residues: Probable allantoate deiminase (491 aa).

Positions 1–32 (MALLLSYPRRHPSIHLLILSAYALFLLPILDG) are cleaved as a signal peptide. The N-linked (GlcNAc...) asparagine glycan is linked to Asn109. Residues His120, Asp131, Glu168, and His234 each coordinate Mn(2+). Asn265 and Asn343 each carry an N-linked (GlcNAc...) asparagine glycan. A Mn(2+)-binding site is contributed by His454.

Belongs to the peptidase M20A family. Homodimer. Mn(2+) serves as cofactor.

The protein resides in the endoplasmic reticulum. The enzyme catalyses allantoate + H2O + 2 H(+) = (S)-2-ureidoglycine + NH4(+) + CO2. Functionally, involved in the catabolism of purine nucleotides. The sequential activity of AAH, UGLYAH and UAH allows a complete purine breakdown without the intermediate generation of urea. The protein is Probable allantoate deiminase of Oryza sativa subsp. japonica (Rice).